The following is a 425-amino-acid chain: MHKILIRNNYKPLVGKIKINGSKNAVLPIMAASLLSSSPVILHNVPDLIDVHLMSKLLESLGAEVNFMHNKNYKANHTLKIDCSNINNHVMPYKTASKLRTSFLILGPMLSRFGKARTAFPGGCNIGKRPVDMHIKALEEMGAKIEIDGYNIIATVKGKLQGKEITFEKISVGATENVIMAATFAEGVTTINNAATEPEVLDLIDFLKKMGADIEIDNTKVVITGVEALNGCVHKIIPDRIEAGTYALAAIITGGKLELEGINLSDIRCITNELETIGAMVELYDGGIVISRKNGSIKSANVATDPYPNFPSDMQPQLMSAMCIADGISVIEENIFENRFTHADELRKLGANISIEKSKATISGIKSLSGANLYATDLRSTAALVLASLVAGGETIINNSHHLWRGYEAMHEKLNSCGADISISS.

23 to 24 (KN) contacts phosphoenolpyruvate. A UDP-N-acetyl-alpha-D-glucosamine-binding site is contributed by arginine 100. The active-site Proton donor is cysteine 124. Cysteine 124 bears the 2-(S-cysteinyl)pyruvic acid O-phosphothioketal mark. 2 residues coordinate UDP-N-acetyl-alpha-D-glucosamine: aspartate 313 and isoleucine 335.

Belongs to the EPSP synthase family. MurA subfamily.

It localises to the cytoplasm. It catalyses the reaction phosphoenolpyruvate + UDP-N-acetyl-alpha-D-glucosamine = UDP-N-acetyl-3-O-(1-carboxyvinyl)-alpha-D-glucosamine + phosphate. It functions in the pathway cell wall biogenesis; peptidoglycan biosynthesis. Cell wall formation. Adds enolpyruvyl to UDP-N-acetylglucosamine. This chain is UDP-N-acetylglucosamine 1-carboxyvinyltransferase, found in Wolbachia sp. subsp. Drosophila simulans (strain wRi).